Reading from the N-terminus, the 291-residue chain is ATP synthase gamma chain (291 aa).

The protein belongs to the ATPase gamma chain family. F-type ATPases have 2 components, CF(1) - the catalytic core - and CF(0) - the membrane proton channel. CF(1) has five subunits: alpha(3), beta(3), gamma(1), delta(1), epsilon(1). CF(0) has three main subunits: a, b and c.

Its subcellular location is the cell inner membrane. In terms of biological role, produces ATP from ADP in the presence of a proton gradient across the membrane. The gamma chain is believed to be important in regulating ATPase activity and the flow of protons through the CF(0) complex. The protein is ATP synthase gamma chain of Burkholderia lata (strain ATCC 17760 / DSM 23089 / LMG 22485 / NCIMB 9086 / R18194 / 383).